A 353-amino-acid chain; its full sequence is uncharacterized protein (353 aa).

The protein belongs to the MG067/MG068/MG395 family.

This is an uncharacterized protein from Mycoplasma pneumoniae (strain ATCC 29342 / M129 / Subtype 1) (Mycoplasmoides pneumoniae).